The primary structure comprises 385 residues: MVKYISILGSTGSIGTSALDVVSAHPEHFKIVGLTANYNIELLEQQIKTFQPRIVSVATKELADTLRTRISTNTKITYGTDGLIAVATHPNSNLVLSSVVGVSGLLPTIEALKAKKDIAIANKETLVAAGHIVTELAKQNGCRLIPVDSEHSAIFQCLNGENNKEIDKLIVTASGGAFRDKTREEMKTLQAKDALKHPNWLMGAKLTIDSATLMNKGFEVMEARWLFDIPYEKIDVMIHKESIIHSLVEFIDGSVIAQLGAPDMRMPIQYAFHYPTRLPSSYEKLNLLEIGSLHFEKPDLEKFPCLQYAYECGKIGGTTPAVLNAANEIANALFLKNEIAFFDIEKTIYKTVEAHHNVKDPSLDAILEADQWARQYANQLLIKKS.

NADPH-binding residues include T11, G12, S13, I14, N39, and N122. K123 contributes to the 1-deoxy-D-xylulose 5-phosphate binding site. NADPH is bound at residue E124. Mn(2+) is bound at residue D148. 4 residues coordinate 1-deoxy-D-xylulose 5-phosphate: S149, E150, S174, and H197. E150 contacts Mn(2+). Residue G203 coordinates NADPH. Residues S210, N215, K216, and E219 each contribute to the 1-deoxy-D-xylulose 5-phosphate site. E219 is a binding site for Mn(2+).

It belongs to the DXR family. Requires Mg(2+) as cofactor. The cofactor is Mn(2+).

It catalyses the reaction 2-C-methyl-D-erythritol 4-phosphate + NADP(+) = 1-deoxy-D-xylulose 5-phosphate + NADPH + H(+). It participates in isoprenoid biosynthesis; isopentenyl diphosphate biosynthesis via DXP pathway; isopentenyl diphosphate from 1-deoxy-D-xylulose 5-phosphate: step 1/6. In terms of biological role, catalyzes the NADPH-dependent rearrangement and reduction of 1-deoxy-D-xylulose-5-phosphate (DXP) to 2-C-methyl-D-erythritol 4-phosphate (MEP). This chain is 1-deoxy-D-xylulose 5-phosphate reductoisomerase 1, found in Bacillus thuringiensis subsp. konkukian (strain 97-27).